A 399-amino-acid chain; its full sequence is Beta sliding clamp (399 aa).

Belongs to the beta sliding clamp family. In terms of assembly, forms a ring-shaped head-to-tail homodimer around DNA which binds and tethers DNA polymerases and other proteins to the DNA. The DNA replisome complex has a single clamp-loading complex (3 tau and 1 each of delta, delta', psi and chi subunits) which binds 3 Pol III cores (1 core on the leading strand and 2 on the lagging strand) each with a beta sliding clamp dimer. Additional proteins in the replisome are other copies of gamma, psi and chi, Ssb, DNA helicase and RNA primase.

It localises to the cytoplasm. Functionally, confers DNA tethering and processivity to DNA polymerases and other proteins. Acts as a clamp, forming a ring around DNA (a reaction catalyzed by the clamp-loading complex) which diffuses in an ATP-independent manner freely and bidirectionally along dsDNA. Initially characterized for its ability to contact the catalytic subunit of DNA polymerase III (Pol III), a complex, multichain enzyme responsible for most of the replicative synthesis in bacteria; Pol III exhibits 3'-5' exonuclease proofreading activity. The beta chain is required for initiation of replication as well as for processivity of DNA replication. The polypeptide is Beta sliding clamp (dnaN) (Mycobacterium leprae (strain TN)).